Consider the following 425-residue polypeptide: Serine--tRNA ligase (425 aa).

L-serine is bound at residue 228-230; sequence TAE. ATP is bound at residue 259-261; sequence RSE. An L-serine-binding site is contributed by glutamate 282. 346-349 serves as a coordination point for ATP; the sequence is EIAS. Serine 382 serves as a coordination point for L-serine.

The protein belongs to the class-II aminoacyl-tRNA synthetase family. Type-1 seryl-tRNA synthetase subfamily. As to quaternary structure, homodimer. The tRNA molecule binds across the dimer.

Its subcellular location is the cytoplasm. The enzyme catalyses tRNA(Ser) + L-serine + ATP = L-seryl-tRNA(Ser) + AMP + diphosphate + H(+). The catalysed reaction is tRNA(Sec) + L-serine + ATP = L-seryl-tRNA(Sec) + AMP + diphosphate + H(+). Its pathway is aminoacyl-tRNA biosynthesis; selenocysteinyl-tRNA(Sec) biosynthesis; L-seryl-tRNA(Sec) from L-serine and tRNA(Sec): step 1/1. Catalyzes the attachment of serine to tRNA(Ser). Is also able to aminoacylate tRNA(Sec) with serine, to form the misacylated tRNA L-seryl-tRNA(Sec), which will be further converted into selenocysteinyl-tRNA(Sec). This chain is Serine--tRNA ligase, found in Rickettsia massiliae (strain Mtu5).